A 369-amino-acid chain; its full sequence is Probable dual-specificity RNA methyltransferase RlmN (369 aa).

The active-site Proton acceptor is glutamate 108. One can recognise a Radical SAM core domain in the interval 114–351; the sequence is YPDRATLCIS…IAQGVSCTVR (238 aa). Cysteine 121 and cysteine 362 are joined by a disulfide. The [4Fe-4S] cluster site is built by cysteine 128, cysteine 132, and cysteine 135. Residues 183–184, serine 217, 240–242, and asparagine 319 contribute to the S-adenosyl-L-methionine site; these read GE and SLH. The active-site S-methylcysteine intermediate is the cysteine 362.

The protein belongs to the radical SAM superfamily. RlmN family. Requires [4Fe-4S] cluster as cofactor.

The protein localises to the cytoplasm. The enzyme catalyses adenosine(2503) in 23S rRNA + 2 reduced [2Fe-2S]-[ferredoxin] + 2 S-adenosyl-L-methionine = 2-methyladenosine(2503) in 23S rRNA + 5'-deoxyadenosine + L-methionine + 2 oxidized [2Fe-2S]-[ferredoxin] + S-adenosyl-L-homocysteine. It carries out the reaction adenosine(37) in tRNA + 2 reduced [2Fe-2S]-[ferredoxin] + 2 S-adenosyl-L-methionine = 2-methyladenosine(37) in tRNA + 5'-deoxyadenosine + L-methionine + 2 oxidized [2Fe-2S]-[ferredoxin] + S-adenosyl-L-homocysteine. Functionally, specifically methylates position 2 of adenine 2503 in 23S rRNA and position 2 of adenine 37 in tRNAs. In Rhodococcus erythropolis (strain PR4 / NBRC 100887), this protein is Probable dual-specificity RNA methyltransferase RlmN.